A 68-amino-acid chain; its full sequence is Pleurocidin-like peptide WF4 (68 aa).

The first 22 residues, 1–22 (MKFTATFLMMFIFVLMVEPGEC), serve as a signal peptide directing secretion. Positions 48 to 68 (GEQQDLDKRAVDEDPNVIVFE) are excised as a propeptide.

It belongs to the pleurocidin family.

It is found in the secreted. Functionally, antimicrobial peptide. This Pseudopleuronectes americanus (Winter flounder) protein is Pleurocidin-like peptide WF4 (ple4).